A 26-amino-acid chain; its full sequence is Conotoxin Eb6.15 (26 aa).

2 disulfide bridges follow: Cys-7–Cys-18 and Cys-13–Cys-25.

The protein belongs to the conotoxin O1 superfamily. In terms of tissue distribution, expressed by the venom duct.

It localises to the secreted. The sequence is that of Conotoxin Eb6.15 (E1) from Conus ebraeus (Hebrew cone).